The primary structure comprises 1290 residues: Alpha-amylase (1290 aa).

The N-terminal stretch at 1-31 (MTRKTRYLHQITTLILGGLLIVPAAAPPVSA) is a signal peptide. Residue glutamate 231 is the Nucleophile of the active site. Aspartate 373 acts as the Proton donor in catalysis. The Fibronectin type-III domain occupies 817–902 (VPANLQATVM…AAATATTPAG (86 aa)). A CBM25 region spans residues 902–978 (GNHVTVYYKQ…SNGGSNYLFG (77 aa)). Low complexity-rich tracts occupy residues 994–1008 (APVA…APTA) and 1016–1031 (VTPT…VAPT). The disordered stretch occupies residues 994–1037 (APVAPSATPTVAPTATPTPKPSVTPTVTPITTPTVAPTLSPTPT). The segment at 1092–1171 (GNSATIYYKN…NGGSNYHFGT (80 aa)) is CBM25. The CBM20 domain occupies 1183-1289 (TGEPQADSVT…VTLTVQRWKD (107 aa)).

Belongs to the glycosyl hydrolase 119 (GH119) family.

The protein localises to the secreted. The catalysed reaction is Endohydrolysis of (1-&gt;4)-alpha-D-glucosidic linkages in polysaccharides containing three or more (1-&gt;4)-alpha-linked D-glucose units.. Acts on maltooligosaccharides that have a degree of polymerization (DP) of 4 or more, amylose, and soluble or raw starch to produce glucose and maltooligosaccharides up to DP5 by a hydrolysis reaction. Also acts on maltooligosyl trehaloses that have DP5 or more to produce trehalose as the major hydrolysis product. In Niallia circulans (Bacillus circulans), this protein is Alpha-amylase.